The sequence spans 206 residues: Protein DEHYDRATION-INDUCED 19 (206 aa).

Threonine 105 is subject to Phosphothreonine. Phosphoserine is present on serine 107. Positions 142 to 167 are disordered; that stretch reads SSFISPTRSQSSPAPRQTKNVSEDKQ. A compositionally biased stretch (polar residues) spans 143–161; it reads SFISPTRSQSSPAPRQTKN.

The protein belongs to the Di19 family. Interacts with ADO2/LKP2, CPK11 and CPK4. Weak interaction with CPK12 and no interactions with CPK1, CPK5 or CPK26. Phosphorylated within the NLS/NES region. As to expression, expressed in seedlings, roots, leaves, stems, flowers and siliques.

It is found in the nucleus. This chain is Protein DEHYDRATION-INDUCED 19 (DI19-1), found in Arabidopsis thaliana (Mouse-ear cress).